We begin with the raw amino-acid sequence, 657 residues long: Zinc finger protein 630 (657 aa).

A KRAB domain is found at V8–P79. 2 consecutive C2H2-type zinc fingers follow at residues N263–H285 and Y291–H313. The C2H2-type 3; degenerate zinc-finger motif lies at Y319–H341. C2H2-type zinc fingers lie at residues Y347–H369, F375–H397, Y403–H425, Y431–H453, Y459–H481, Y487–H509, Y515–H537, Y543–H565, and Y571–H593. A C2H2-type 13; degenerate zinc finger spans residues P599–H621. The segment at S627–Y649 adopts a C2H2-type 14; degenerate zinc-finger fold.

It belongs to the krueppel C2H2-type zinc-finger protein family.

It localises to the nucleus. Functionally, may be involved in transcriptional regulation. The sequence is that of Zinc finger protein 630 (ZNF630) from Homo sapiens (Human).